A 295-amino-acid chain; its full sequence is 4-hydroxy-3-methylbut-2-enyl diphosphate reductase (295 aa).

Cysteine 12 lines the [4Fe-4S] cluster pocket. Positions 43 and 81 each coordinate (2E)-4-hydroxy-3-methylbut-2-enyl diphosphate. Dimethylallyl diphosphate is bound by residues histidine 43 and histidine 81. Residues histidine 43 and histidine 81 each coordinate isopentenyl diphosphate. Cysteine 103 serves as a coordination point for [4Fe-4S] cluster. Residue histidine 131 participates in (2E)-4-hydroxy-3-methylbut-2-enyl diphosphate binding. Position 131 (histidine 131) interacts with dimethylallyl diphosphate. Residue histidine 131 participates in isopentenyl diphosphate binding. Glutamate 133 acts as the Proton donor in catalysis. Residue threonine 171 coordinates (2E)-4-hydroxy-3-methylbut-2-enyl diphosphate. Cysteine 199 lines the [4Fe-4S] cluster pocket. The (2E)-4-hydroxy-3-methylbut-2-enyl diphosphate site is built by serine 227, asparagine 229, and serine 272. 3 residues coordinate dimethylallyl diphosphate: serine 227, asparagine 229, and serine 272. Isopentenyl diphosphate is bound by residues serine 227, asparagine 229, and serine 272.

Belongs to the IspH family. Requires [4Fe-4S] cluster as cofactor.

The catalysed reaction is isopentenyl diphosphate + 2 oxidized [2Fe-2S]-[ferredoxin] + H2O = (2E)-4-hydroxy-3-methylbut-2-enyl diphosphate + 2 reduced [2Fe-2S]-[ferredoxin] + 2 H(+). The enzyme catalyses dimethylallyl diphosphate + 2 oxidized [2Fe-2S]-[ferredoxin] + H2O = (2E)-4-hydroxy-3-methylbut-2-enyl diphosphate + 2 reduced [2Fe-2S]-[ferredoxin] + 2 H(+). It functions in the pathway isoprenoid biosynthesis; dimethylallyl diphosphate biosynthesis; dimethylallyl diphosphate from (2E)-4-hydroxy-3-methylbutenyl diphosphate: step 1/1. Its pathway is isoprenoid biosynthesis; isopentenyl diphosphate biosynthesis via DXP pathway; isopentenyl diphosphate from 1-deoxy-D-xylulose 5-phosphate: step 6/6. Functionally, catalyzes the conversion of 1-hydroxy-2-methyl-2-(E)-butenyl 4-diphosphate (HMBPP) into a mixture of isopentenyl diphosphate (IPP) and dimethylallyl diphosphate (DMAPP). Acts in the terminal step of the DOXP/MEP pathway for isoprenoid precursor biosynthesis. The chain is 4-hydroxy-3-methylbut-2-enyl diphosphate reductase from Symbiobacterium thermophilum (strain DSM 24528 / JCM 14929 / IAM 14863 / T).